A 147-amino-acid chain; its full sequence is Protein-export protein SecB (147 aa).

It belongs to the SecB family. Homotetramer, a dimer of dimers. One homotetramer interacts with 1 SecA dimer.

The protein resides in the cytoplasm. In terms of biological role, one of the proteins required for the normal export of preproteins out of the cell cytoplasm. It is a molecular chaperone that binds to a subset of precursor proteins, maintaining them in a translocation-competent state. It also specifically binds to its receptor SecA. In Neisseria gonorrhoeae (strain ATCC 700825 / FA 1090), this protein is Protein-export protein SecB.